The sequence spans 458 residues: GTPase Der (458 aa).

EngA-type G domains are found at residues 4-169 (PSIA…PKDL) and 178-353 (IMMS…TQHR). Residues 10–17 (GRPNVGKS), 57–61 (DTGGL), 120–123 (NKCE), 184–191 (GRPNVGKS), 231–235 (DTAGI), and 296–299 (NKWD) each bind GTP. The region spanning 354-439 (RRVTTSVVNE…PIILLWRGKQ (86 aa)) is the KH-like domain.

Belongs to the TRAFAC class TrmE-Era-EngA-EngB-Septin-like GTPase superfamily. EngA (Der) GTPase family. In terms of assembly, associates with the 50S ribosomal subunit.

GTPase that plays an essential role in the late steps of ribosome biogenesis. The polypeptide is GTPase Der (Prochlorococcus marinus subsp. pastoris (strain CCMP1986 / NIES-2087 / MED4)).